The chain runs to 123 residues: Large ribosomal subunit protein uL14 (123 aa).

The protein belongs to the universal ribosomal protein uL14 family. As to quaternary structure, part of the 50S ribosomal subunit. Forms a cluster with proteins L3 and L19. In the 70S ribosome, L14 and L19 interact and together make contacts with the 16S rRNA in bridges B5 and B8.

Its function is as follows. Binds to 23S rRNA. Forms part of two intersubunit bridges in the 70S ribosome. In Corynebacterium jeikeium (strain K411), this protein is Large ribosomal subunit protein uL14.